Here is a 461-residue protein sequence, read N- to C-terminus: Tip elongation protein 1 (461 aa).

The CAP-Gly domain occupies 22-69 (GEVENRKGVYVGLELLPEFAEFGKNRGVVDGREYFKTKNNEKTGIFVP). Ser-82, Ser-84, Ser-289, Ser-294, and Ser-305 each carry phosphoserine. The stretch at 134–418 (TEKILQKRIE…RMSPAEFELE (285 aa)) forms a coiled coil. The segment covering 278–303 (KANSSTANEKLSHMESSSPTLTNASF) has biased composition (polar residues). The interval 278–323 (KANSSTANEKLSHMESSSPTLTNASFESPKRGKGSNDLPENHPQRR) is disordered. Position 367 is a phosphothreonine (Thr-367). The tract at residues 417-437 (LETTQEVEENDSDSHDDEETW) is disordered.

In terms of assembly, monomer. Interacts with tea1 and tea2. Interacts with tea4 in the presence of tea1.

The protein localises to the cytoplasm. The protein resides in the cytoskeleton. In terms of biological role, has a role in stabilizing and targeting the growing tips of the microtubules along the long axis of the cell, directing them to the ends of the cell. Acts as a cargo for tea2. In Schizosaccharomyces pombe (strain 972 / ATCC 24843) (Fission yeast), this protein is Tip elongation protein 1 (tip1).